Reading from the N-terminus, the 377-residue chain is Phospho-N-acetylmuramoyl-pentapeptide-transferase (377 aa).

A run of 10 helical transmembrane segments spans residues 27 to 47, 71 to 91, 94 to 114, 139 to 159, 182 to 202, 216 to 236, 252 to 272, 280 to 300, 305 to 325, and 354 to 374; these read TAFASLTALLIALLIGPYVIE, GTPTMGGVLICIAILLPTLLW, LSDPFVWIVMLSTLAFGAIGF, ILASAAIGVALVVLQGQGSYS, VPHLAYFAFIPFVIFVIIVIV, GLAIGCTIIAAGALTVLTYVS, MVGEVTIFCGAMVGASIGFLW, IFMGDVGSLALGGAIATVAVV, LLLPFIGGIFVLEALSVILQV, and KVIVRFWIAALVFALFALTTL.

This sequence belongs to the glycosyltransferase 4 family. MraY subfamily. Requires Mg(2+) as cofactor.

The protein localises to the cell inner membrane. It carries out the reaction UDP-N-acetyl-alpha-D-muramoyl-L-alanyl-gamma-D-glutamyl-meso-2,6-diaminopimeloyl-D-alanyl-D-alanine + di-trans,octa-cis-undecaprenyl phosphate = di-trans,octa-cis-undecaprenyl diphospho-N-acetyl-alpha-D-muramoyl-L-alanyl-D-glutamyl-meso-2,6-diaminopimeloyl-D-alanyl-D-alanine + UMP. The protein operates within cell wall biogenesis; peptidoglycan biosynthesis. Functionally, catalyzes the initial step of the lipid cycle reactions in the biosynthesis of the cell wall peptidoglycan: transfers peptidoglycan precursor phospho-MurNAc-pentapeptide from UDP-MurNAc-pentapeptide onto the lipid carrier undecaprenyl phosphate, yielding undecaprenyl-pyrophosphoryl-MurNAc-pentapeptide, known as lipid I. This is Phospho-N-acetylmuramoyl-pentapeptide-transferase from Acidobacterium capsulatum (strain ATCC 51196 / DSM 11244 / BCRC 80197 / JCM 7670 / NBRC 15755 / NCIMB 13165 / 161).